A 51-amino-acid polypeptide reads, in one-letter code: Lantibiotic lacticin-481 (51 aa).

The propeptide occupies 1–24 (MKEQNSFNLLQEVTESELDLILGA). The segment at residues 33–38 (TISHEC) is a cross-link (beta-methyllanthionine (Thr-Cys)). Cross-links (lanthionine (Ser-Cys)) lie at residues 35–49 (SHEC…VFTC) and 42–50 (SWQFVFTCC). Thr48 is subject to (Z)-2,3-didehydrobutyrine.

The protein belongs to the type A lantibiotic family. Monomer or homodimer. Post-translationally, maturation of lantibiotics involves the enzymatic conversion of Thr, and Ser into dehydrated AA and the formation of thioether bonds with cysteine. This is followed by membrane translocation and cleavage of the modified precursor. It is established that the 2,3-didehydrobutyrine is the Z-isomer.

Its function is as follows. Lanthionine-containing peptide antibiotic (lantibiotic) active on Gram-positive bacteria. The bactericidal activity of lantibiotics is based on depolarization of energized bacterial cytoplasmic membranes, initiated by the formation of aqueous transmembrane pores. Lacticin 481 is a broad spectrum bacteriocin exhibiting activity against a wide range of lactic acid bacteria and C.tyrobutyricum. In Lactococcus lactis subsp. lactis (Streptococcus lactis), this protein is Lantibiotic lacticin-481 (lctA).